A 214-amino-acid polypeptide reads, in one-letter code: Probable transaldolase (214 aa).

The active-site Schiff-base intermediate with substrate is K83.

Belongs to the transaldolase family. Type 3B subfamily.

The protein resides in the cytoplasm. The enzyme catalyses D-sedoheptulose 7-phosphate + D-glyceraldehyde 3-phosphate = D-erythrose 4-phosphate + beta-D-fructose 6-phosphate. It functions in the pathway carbohydrate degradation; pentose phosphate pathway; D-glyceraldehyde 3-phosphate and beta-D-fructose 6-phosphate from D-ribose 5-phosphate and D-xylulose 5-phosphate (non-oxidative stage): step 2/3. Functionally, transaldolase is important for the balance of metabolites in the pentose-phosphate pathway. This is Probable transaldolase from Leptospira borgpetersenii serovar Hardjo-bovis (strain JB197).